The chain runs to 315 residues: Acetyl-coenzyme A carboxylase carboxyl transferase subunit alpha (315 aa).

A CoA carboxyltransferase C-terminal domain is found at 40–293 (LQDKSKTLTE…RAELSSQLAM (254 aa)).

This sequence belongs to the AccA family. As to quaternary structure, acetyl-CoA carboxylase is a heterohexamer composed of biotin carboxyl carrier protein (AccB), biotin carboxylase (AccC) and two subunits each of ACCase subunit alpha (AccA) and ACCase subunit beta (AccD).

The protein resides in the cytoplasm. The enzyme catalyses N(6)-carboxybiotinyl-L-lysyl-[protein] + acetyl-CoA = N(6)-biotinyl-L-lysyl-[protein] + malonyl-CoA. The protein operates within lipid metabolism; malonyl-CoA biosynthesis; malonyl-CoA from acetyl-CoA: step 1/1. In terms of biological role, component of the acetyl coenzyme A carboxylase (ACC) complex. First, biotin carboxylase catalyzes the carboxylation of biotin on its carrier protein (BCCP) and then the CO(2) group is transferred by the carboxyltransferase to acetyl-CoA to form malonyl-CoA. The chain is Acetyl-coenzyme A carboxylase carboxyl transferase subunit alpha from Pseudomonas fluorescens (strain Pf0-1).